Here is a 368-residue protein sequence, read N- to C-terminus: Putative phospho-2-dehydro-3-deoxyheptonate aldolase (368 aa).

The protein belongs to the class-I DAHP synthase family.

The enzyme catalyses D-erythrose 4-phosphate + phosphoenolpyruvate + H2O = 7-phospho-2-dehydro-3-deoxy-D-arabino-heptonate + phosphate. It participates in metabolic intermediate biosynthesis; chorismate biosynthesis; chorismate from D-erythrose 4-phosphate and phosphoenolpyruvate: step 1/7. Stereospecific condensation of phosphoenolpyruvate (PEP) and D-erythrose-4-phosphate (E4P) giving rise to 3-deoxy-D-arabino-heptulosonate-7-phosphate (DAHP). This is Putative phospho-2-dehydro-3-deoxyheptonate aldolase from Schizosaccharomyces pombe (strain 972 / ATCC 24843) (Fission yeast).